A 206-amino-acid chain; its full sequence is Protein YmaB (206 aa).

This is Protein YmaB (ymaB) from Bacillus subtilis (strain 168).